The following is a 447-amino-acid chain: Serine/threonine-protein phosphatase 2A 55 kDa regulatory subunit B delta isoform (447 aa).

WD repeat units lie at residues 26–65 (AEAD…KNRP), 91–132 (EIEE…KRAE), 175–213 (AHTY…RSFN), 224–264 (ELTE…LCDR), 283–321 (EIIS…RPVE), 338–379 (ENDC…DITL), and 414–447 (DFNK…DKMN).

The protein belongs to the phosphatase 2A regulatory subunit B family. PP2A consists of a common heterodimeric core enzyme, composed of a 36 kDa catalytic subunit (subunit C) and a 65 kDa constant regulatory subunit (PR65 or subunit A), that associates with a variety of regulatory subunits.

The protein localises to the cytoplasm. Substrate-recognition subunit of protein phosphatase 2A (PP2A) that plays a key role in cell cycle by controlling mitosis entry and exit. The activity of PP2A complexes containing PPP2R2D (PR55-delta) fluctuate during the cell cycle: the activity is high in interphase and low in mitosis. The chain is Serine/threonine-protein phosphatase 2A 55 kDa regulatory subunit B delta isoform (ppp2r2d) from Danio rerio (Zebrafish).